The primary structure comprises 1036 residues: Vacuolar basic amino acid transporter VSB1 (1036 aa).

Over 1-213 the chain is Vacuolar; sequence MGRTIRRRRS…SKFAHYLPAA (213 aa). 2 positions are modified to phosphoserine: Ser42 and Ser127. A Phosphothreonine modification is found at Thr130. Phosphoserine occurs at positions 140, 144, 149, 152, and 153. Residues 214–234 traverse the membrane as a helical segment; that stretch reads VLGLLLNILDALSYGMIIFPI. The Cytoplasmic portion of the chain corresponds to 235-236; it reads TE. A helical membrane pass occupies residues 237-257; sequence PVFSHLGPTGISMFYISTIIS. At 258–269 the chain is on the vacuolar side; that stretch reads QAVYSGGWSSFP. The helical transmembrane segment at 270–290 threads the bilayer; the sequence is SGIGSEMIEITPFYHTMALAI. The Cytoplasmic segment spans residues 291-300; that stretch reads KEALAGNDDE. The chain crosses the membrane as a helical span at residues 301–321; the sequence is IITTTIFCYVISSMLTGVVFY. Over 322–338 the chain is Vacuolar; sequence ALGKLRLGKIVGFFPRH. A helical membrane pass occupies residues 339–359; sequence ILIGCIGGVGYFLIITGIEVT. Residues 360 to 375 are Cytoplasmic-facing; it reads TRVAKFEYSWPFFSGL. A helical transmembrane segment spans residues 376–396; that stretch reads FTDYDTLAKWLLPVLLTVVLI. Residues 397-405 are Vacuolar-facing; it reads GTQRYFKNS. A helical transmembrane segment spans residues 406–426; sequence LVLPSFYILTLVLFHFIVAII. Topologically, residues 427–473 are cytoplasmic; that stretch reads PTLSLDALRQAGWIFPIANSDSKWYDHYRLFNVHKVHWSLVLQQIPT. A helical transmembrane segment spans residues 474-494; it reads MMALTFFGILHVPINVPALAM. Residues 495–515 are Vacuolar-facing; the sequence is SLQMDKYDVDRELIAHGYSNF. Residues 516–536 traverse the membrane as a helical segment; the sequence is FSGLLGSVQNYLVYTNSVLFI. The Cytoplasmic portion of the chain corresponds to 537-546; that stretch reads RAGADSPFAG. Residues 547–567 form a helical membrane-spanning segment; sequence FLLIALTICIMIIGPVIISFI. A topological domain (vacuolar) is located at residue Pro568. Residues 569-589 traverse the membrane as a helical segment; sequence ICIVGSLIFLLGYELLVEALV. Residues 590–604 lie on the Cytoplasmic side of the membrane; that stretch reads DTWNKLNRFEYLTVV. A helical transmembrane segment spans residues 605–625; sequence IIVFTMGIFDFVLGIIVGILI. The Vacuolar segment spans residues 626 to 664; it reads ACFSFLVDSTKLQTINGEYNGNVARSTVYRDYVQTKFLD. The STAS domain maps to 660-781; that stretch reads TKFLDGIGEQ…ADLNSALEWC (122 aa). A helical transmembrane segment spans residues 665-685; sequence GIGEQIYVLKLQNLLFFGTII. Over 686–1036 the chain is Cytoplasmic; that stretch reads SIEEKIERLL…ELLGYTLVSA (351 aa). Ser842 bears the Phosphoserine mark. Residue Thr847 is modified to Phosphothreonine.

Its subcellular location is the vacuole membrane. Amino acid transporter involved in vacuolar uptake of basic amino acids for storage during nitrogen replete condititions. May function as an amino acid/proton antiporter. This chain is Vacuolar basic amino acid transporter VSB1, found in Saccharomyces cerevisiae (strain ATCC 204508 / S288c) (Baker's yeast).